A 591-amino-acid polypeptide reads, in one-letter code: Aspartate--tRNA(Asp/Asn) ligase (591 aa).

Residue glutamate 175 coordinates L-aspartate. The segment at 199–202 is aspartate; sequence QQFK. The L-aspartate site is built by arginine 221 and histidine 453. An ATP-binding site is contributed by 221 to 223; that stretch reads RDE. Residue glutamate 486 participates in ATP binding. An L-aspartate-binding site is contributed by arginine 493. ATP is bound at residue 538 to 541; it reads GIDR.

It belongs to the class-II aminoacyl-tRNA synthetase family. Type 1 subfamily. In terms of assembly, homodimer.

Its subcellular location is the cytoplasm. The catalysed reaction is tRNA(Asx) + L-aspartate + ATP = L-aspartyl-tRNA(Asx) + AMP + diphosphate. Its function is as follows. Aspartyl-tRNA synthetase with relaxed tRNA specificity since it is able to aspartylate not only its cognate tRNA(Asp) but also tRNA(Asn). Reaction proceeds in two steps: L-aspartate is first activated by ATP to form Asp-AMP and then transferred to the acceptor end of tRNA(Asp/Asn). This Cereibacter sphaeroides (strain ATCC 17025 / ATH 2.4.3) (Rhodobacter sphaeroides) protein is Aspartate--tRNA(Asp/Asn) ligase.